The sequence spans 430 residues: Probable FAD-dependent monooxygenase (430 aa).

An N-terminal signal peptide occupies residues 1-23 (MGSTSTPPHVLIIGAGITGLALA). Position 9 to 37 (9 to 37 (HVLIIGAGITGLALAQALRKHGVSFAVYE)) interacts with FAD. N-linked (GlcNAc...) asparagine glycosylation is found at Asn-130 and Asn-151. 307–330 (LEDWPTPPKGSWSNLGGTATLVGD) lines the FAD pocket.

Requires FAD as cofactor.

In Arthroderma benhamiae (strain ATCC MYA-4681 / CBS 112371) (Trichophyton mentagrophytes), this protein is Probable FAD-dependent monooxygenase.